Reading from the N-terminus, the 489-residue chain is Serine/arginine-rich splicing factor 4 (489 aa).

One can recognise an RRM 1 domain in the interval 2–72; the sequence is PRVYIGRLSY…ERVIVEHARG (71 aa). 2 disordered regions span residues 72–95 and 169–489; these read GPRRDGSYGSGRSGYGYRRSGRDK and KIRL…HSRS. A phosphoserine mark is found at S78 and S84. The RRM 2 domain maps to 104–177; that stretch reads YRLIVENLSS…RKIRLVEDKP (74 aa). Basic residues-rich tracts occupy residues 179 to 206 and 214 to 246; these read SRRRRSYSRSRSHSRSRSRSRHSRKSRS and SHSKSRSRSRSGSHSRSKSRSRSQSRSRSKKEK. Positions 247-279 are enriched in basic and acidic residues; sequence SRSPSKDNKSRSRSRSPDKSRSKSKDHAEDKLQ. A phosphoserine mark is found at S289, S291, and S293. Residues 293 to 332 are compositionally biased toward basic and acidic residues; that stretch reads SRHDSKSRSRSQERRAEEERRRSVSRARSQEKSRSQEKSL. Residues 333–356 are compositionally biased toward basic residues; sequence LKSRSRSRSRSRSRSKDKRKGRKR. Basic and acidic residues-rich tracts occupy residues 357-370 and 394-426; these read SRDESRSRSRSKSE and KDTDHSRSPSRSVSKEREHAKAESGQRGSRAEG. Residues S441, S453, and S455 each carry the phosphoserine modification. Basic residues-rich tracts occupy residues 456-469 and 479-489; these read RSKSASKTRSRSKS and SRSRSRSHSRS.

Belongs to the splicing factor SR family. Found in a pre-mRNA splicing complex with SRSF4/SFRS4, SRSF5/SFRS5, SNRNP70, SNRPA1, SRRM1 and SRRM2. Interacts with PNN. Post-translationally, extensively phosphorylated on serine residues in the RS domain.

The protein resides in the nucleus speckle. Functionally, plays a role in alternative splice site selection during pre-mRNA splicing. Represses the splicing of MAPT/Tau exon 10. This chain is Serine/arginine-rich splicing factor 4 (Srsf4), found in Mus musculus (Mouse).